Reading from the N-terminus, the 338-residue chain is Ketol-acid reductoisomerase (NADP(+)) (338 aa).

The 181-residue stretch at Met-1–Thr-181 folds into the KARI N-terminal Rossmann domain. Residues Tyr-24–Gln-27, Arg-47, and Ser-52 contribute to the NADP(+) site. His-107 is an active-site residue. Gly-133 contributes to the NADP(+) binding site. The KARI C-terminal knotted domain maps to Asn-182–Ile-327. Mg(2+) is bound by residues Asp-190, Glu-194, Glu-226, and Glu-230. A substrate-binding site is contributed by Ser-251.

This sequence belongs to the ketol-acid reductoisomerase family. Requires Mg(2+) as cofactor.

The enzyme catalyses (2R)-2,3-dihydroxy-3-methylbutanoate + NADP(+) = (2S)-2-acetolactate + NADPH + H(+). It catalyses the reaction (2R,3R)-2,3-dihydroxy-3-methylpentanoate + NADP(+) = (S)-2-ethyl-2-hydroxy-3-oxobutanoate + NADPH + H(+). The protein operates within amino-acid biosynthesis; L-isoleucine biosynthesis; L-isoleucine from 2-oxobutanoate: step 2/4. It participates in amino-acid biosynthesis; L-valine biosynthesis; L-valine from pyruvate: step 2/4. Its function is as follows. Involved in the biosynthesis of branched-chain amino acids (BCAA). Catalyzes an alkyl-migration followed by a ketol-acid reduction of (S)-2-acetolactate (S2AL) to yield (R)-2,3-dihydroxy-isovalerate. In the isomerase reaction, S2AL is rearranged via a Mg-dependent methyl migration to produce 3-hydroxy-3-methyl-2-ketobutyrate (HMKB). In the reductase reaction, this 2-ketoacid undergoes a metal-dependent reduction by NADPH to yield (R)-2,3-dihydroxy-isovalerate. The sequence is that of Ketol-acid reductoisomerase (NADP(+)) from Polynucleobacter necessarius subsp. necessarius (strain STIR1).